Consider the following 401-residue polypeptide: Voltage-gated potassium channel subunit beta-1 (401 aa).

Thr-90, Trp-91, Gln-97, and Asp-119 together coordinate NADP(+). Tyr-124 acts as the Proton donor/acceptor in catalysis. NADP(+)-binding residues include Asn-192, Ser-222, Arg-223, Gln-248, Trp-277, Ser-278, Pro-279, Leu-280, Ala-281, Cys-282, Lys-288, Arg-298, Gly-357, Ser-359, Gln-363, Glu-366, and Asn-367.

It belongs to the shaker potassium channel beta subunit family. As to quaternary structure, homotetramer. Interaction with tetrameric potassium channel alpha subunits gives rise to a heterooctamer. Identified in potassium channel complexes containing KCNA1, KCNA2, KCNA4, KCNA5, KCNA6, KCNAB1 and KCNAB2. Part of a complex containing KCNA1, KCNA4 and LGI1; interaction with LGI1 inhibits down-regulation of KCNA1 channel activity. Interacts with the dimer formed by GNB1 and GNG2; this enhances KCNA1 binding. Interacts with SQSTM. In terms of tissue distribution, detected in brain, in hippocampus and striatum (at protein level). Predominantly expressed in brain. No expression found in heart, skeletal muscle or kidney. In the late embryonic and early neonatal brain, highly expressed in hippocampus, cerebral cortex, caudate putamen, colliculus and cerebellum.

The protein localises to the cytoplasm. It is found in the membrane. Its subcellular location is the cell membrane. The catalysed reaction is a primary alcohol + NADP(+) = an aldehyde + NADPH + H(+). The enzyme catalyses a secondary alcohol + NADP(+) = a ketone + NADPH + H(+). Its function is as follows. Regulatory subunit of the voltage-gated potassium (Kv) Shaker channels composed of pore-forming and potassium-conducting alpha subunits and of regulatory beta subunits. The beta-1/KCNAB1 cytoplasmic subunit mediates closure of delayed rectifier potassium channels by physically obstructing the pore via its N-terminal domain and increases the speed of channel closure for other family members. Promotes the inactivation of KCNA1, KCNA2, KCNA4, KCNA5 and KCNA6 alpha subunit-containing channels. Displays nicotinamide adenine dinucleotide phosphate (NADPH)-dependent aldoketoreductase activity by catalyzing the NADPH-dependent reduction of a variety of endogenous aldehydes and ketones. The binding of NADPH is required for efficient down-regulation of potassium channel activity. Oxidation of the bound NADPH restrains N-terminal domain from blocking the channel, thereby decreasing N-type inactivation of potassium channel activity. The protein is Voltage-gated potassium channel subunit beta-1 of Mus musculus (Mouse).